The primary structure comprises 109 residues: SKSSIETPPSYNQLNYNENLQRFFNSKPVTAPVETDPIKMEQSYSTPANTGSNLSPMQCFEDSGGSGSSRNCTSGSNLNMGSVTNTSNTGTGTSSGSAPLVTLTESLLK.

Polar residues-rich tracts occupy residues 42 to 56 (QSYS…NLSP) and 68 to 80 (SSRN…NLNM). The disordered stretch occupies residues 42-109 (QSYSTPANTG…LVTLTESLLK (68 aa)). Residues 81–97 (GSVTNTSNTGTGTSSGS) show a composition bias toward low complexity.

As to quaternary structure, forms a heterodimer with timeless (TIM); the complex then translocates into the nucleus. Post-translationally, phosphorylated with a circadian rhythmicity, probably by the double-time protein (dbt). Phosphorylation could be implicated in the stability of per monomer and in the formation of heterodimer per-tim.

The protein resides in the nucleus. It localises to the cytoplasm. Its subcellular location is the perinuclear region. Functionally, essential for biological clock functions. Determines the period length of circadian and ultradian rhythms; an increase in PER dosage leads to shortened circadian rhythms and a decrease leads to lengthened circadian rhythms. Essential for the circadian rhythmicity of locomotor activity, eclosion behavior, and for the rhythmic component of the male courtship song that originates in the thoracic nervous system. The biological cycle depends on the rhythmic formation and nuclear localization of the TIM-PER complex. Light induces the degradation of TIM, which promotes elimination of PER. Nuclear activity of the heterodimer coordinatively regulates PER and TIM transcription through a negative feedback loop. Behaves as a negative element in circadian transcriptional loop. Does not appear to bind DNA, suggesting indirect transcriptional inhibition. In Musca domestica (House fly), this protein is Period circadian protein (per).